Reading from the N-terminus, the 281-residue chain is Probable endonuclease 4 (281 aa).

Residues H69, H109, E145, D179, H182, H216, D229, H231, and E261 each coordinate Zn(2+).

The protein belongs to the AP endonuclease 2 family. Zn(2+) serves as cofactor.

It catalyses the reaction Endonucleolytic cleavage to 5'-phosphooligonucleotide end-products.. Its function is as follows. Endonuclease IV plays a role in DNA repair. It cleaves phosphodiester bonds at apurinic or apyrimidinic (AP) sites, generating a 3'-hydroxyl group and a 5'-terminal sugar phosphate. This chain is Probable endonuclease 4, found in Buchnera aphidicola subsp. Acyrthosiphon pisum (strain APS) (Acyrthosiphon pisum symbiotic bacterium).